Here is a 453-residue protein sequence, read N- to C-terminus: uncharacterized protein (453 aa).

A YrdC-like domain is found at 276 to 437 (IAQTKQIKAL…TKQIVRGSST (162 aa)).

This is an uncharacterized protein from Mycoplasma pneumoniae (strain ATCC 29342 / M129 / Subtype 1) (Mycoplasmoides pneumoniae).